A 223-amino-acid polypeptide reads, in one-letter code: Large ribosomal subunit protein uL3 (223 aa).

The protein belongs to the universal ribosomal protein uL3 family. Part of the 50S ribosomal subunit. Forms a cluster with proteins L14 and L19.

One of the primary rRNA binding proteins, it binds directly near the 3'-end of the 23S rRNA, where it nucleates assembly of the 50S subunit. The polypeptide is Large ribosomal subunit protein uL3 (Cutibacterium acnes (strain DSM 16379 / KPA171202) (Propionibacterium acnes)).